Reading from the N-terminus, the 785-residue chain is Gamma-interferon-inducible protein 16 (785 aa).

The Pyrin domain maps to 5 to 92 (YKNIVLLKGL…KKEKLKAKGL (88 aa)). K45 is modified (N6-acetyllysine). Basic residues predominate over residues 88–99 (KAKGLAPSRKRK). The tract at residues 88-196 (KAKGLAPSRK…TVAKCQATPR (109 aa)) is disordered. S95 bears the Phosphoserine mark. The Nuclear localization signal signature appears at 96-100 (RKRKK). K99 carries the post-translational modification N6-acetyllysine. Residues 104–114 (AASPAPSTSST) are compositionally biased toward low complexity. S106 is modified (phosphoserine). K116 participates in a covalent cross-link: Glycyl lysine isopeptide (Lys-Gly) (interchain with G-Cter in SUMO2). K128 bears the N6-acetyllysine; alternate mark. K128 is covalently cross-linked (Glycyl lysine isopeptide (Lys-Gly) (interchain with G-Cter in SUMO2); alternate). 3 consecutive short sequence motifs (nuclear localization signal) follow at residues 128 to 131 (KRKK), 134 to 136 (KEK), and 140 to 143 (KGSK). A compositionally biased stretch (low complexity) spans 166–182 (SPSPKTSSSAPPNTSST). A phosphoserine mark is found at S168 and S174. The interaction with TP53 C-terminus stretch occupies residues 192–393 (QATPRRSVLQ…SFIQIKKKTN (202 aa)). The HIN-200 1 domain maps to 193 to 393 (ATPRRSVLQK…SFIQIKKKTN (201 aa)). K214 is subject to N6-acetyllysine. Residues 388–442 (IKKKTNPRNNDPKSMKLPQEQSQLPNPSEAGTTFPESHLWTPQMPPTTPSSSFFT) are disordered. Positions 406 to 422 (QEQSQLPNPSEAGTTFP) are enriched in polar residues. N6-acetyllysine is present on residues K444 and K451. Residues 566-765 (EVSIEDSAQS…SHIKVIKTRK (200 aa)) form the HIN-200 2 domain. Positions 571-766 (DSAQSDLKEV…HIKVIKTRKN (196 aa)) are interaction with TP53 core domain. S575 carries the phosphoserine modification. N6-acetyllysine is present on residues K598 and K614. A Glycyl lysine isopeptide (Lys-Gly) (interchain with G-Cter in SUMO2) cross-link involves residue K683. At S780 the chain carries Phosphoserine.

The protein belongs to the HIN-200 family. As to quaternary structure, forms homooligomers. Interacts with TMEM173, AIM2, PYCARD and CASP1. Interacts with BRCA1, TP53, E2F1, RB1 and SP1. Interacts with MTA1. Interacts with MTA1. Interacts with PYDC5. Lysine acetylation in the multipartite nuclear localization signal (NLS) regulates the subcellular location. In terms of processing, phosphorylated on Ser and Thr.

Its subcellular location is the nucleus. It localises to the cytoplasm. Its function is as follows. Binds double-stranded DNA. Binds preferentially to supercoiled DNA and cruciform DNA structures. Seems to be involved in transcriptional regulation. May function as a transcriptional repressor. Could have a role in the regulation of hematopoietic differentiation through activation of unknown target genes. Controls cellular proliferation by modulating the functions of cell cycle regulatory factors including p53/TP53 and the retinoblastoma protein. May be involved in TP53-mediated transcriptional activation by enhancing TP53 sequence-specific DNA binding and modulating TP53 phosphorylation status. Seems to be involved in energy-level-dependent activation of the ATM/ AMPK/TP53 pathway coupled to regulation of autophagy. May be involved in regulation of TP53-mediated cell death also involving BRCA1. May be involved in the senescence of prostate epithelial cells. Involved in innate immune response by recognizing viral dsDNA in the cytosol and probably in the nucleus. After binding to viral DNA in the cytoplasm recruits TMEM173/STING and mediates the induction of IFN-beta. Has anti-inflammatory activity and inhibits the activation of the AIM2 inflammasome, probably via association with AIM2. Proposed to bind viral DNA in the nucleus and to induce the formation of nuclear caspase-1-activating inflammasome formation via association with PYCARD. Inhibits replication of herpesviruses probably by interfering with promoter recruitment of members of the Sp1 family of transcription factors. The protein is Gamma-interferon-inducible protein 16 (IFI16) of Pongo abelii (Sumatran orangutan).